Here is a 365-residue protein sequence, read N- to C-terminus: Peptide chain release factor 2 (365 aa).

Position 251 is an N5-methylglutamine (Gln-251).

It belongs to the prokaryotic/mitochondrial release factor family. Post-translationally, methylated by PrmC. Methylation increases the termination efficiency of RF2.

It is found in the cytoplasm. Peptide chain release factor 2 directs the termination of translation in response to the peptide chain termination codons UGA and UAA. This chain is Peptide chain release factor 2, found in Neorickettsia sennetsu (strain ATCC VR-367 / Miyayama) (Ehrlichia sennetsu).